The following is a 424-amino-acid chain: Na(+)/H(+) antiporter NhaA (424 aa).

Transmembrane regions (helical) follow at residues 23 to 43 (ILLI…LATL), 65 to 85 (VHLW…GLEI), 102 to 122 (LPFI…MFFV), 131 to 151 (GWAI…ALLG), 160 to 180 (LFLV…IALF), 183 to 203 (AKIN…MFAC), 211 to 231 (LLVY…SGVH), 265 to 285 (ALHP…NAGV), 303 to 323 (IAAG…WLAV), 341 to 361 (AVSM…SLAF), and 373 to 393 (IGIL…LRLA).

It belongs to the NhaA Na(+)/H(+) (TC 2.A.33) antiporter family.

The protein localises to the cell inner membrane. It carries out the reaction Na(+)(in) + 2 H(+)(out) = Na(+)(out) + 2 H(+)(in). Its function is as follows. Na(+)/H(+) antiporter that extrudes sodium in exchange for external protons. In Sphingopyxis alaskensis (strain DSM 13593 / LMG 18877 / RB2256) (Sphingomonas alaskensis), this protein is Na(+)/H(+) antiporter NhaA.